Here is a 147-residue protein sequence, read N- to C-terminus: uncharacterized protein (147 aa).

Disordered stretches follow at residues 1–49 and 125–147; these read MRTP…NLNE and SPSPTTSFNSTNPQNTHQTRKSN. Composition is skewed to low complexity over residues 8 to 49 and 125 to 140; these read NNNY…NLNE and SPSPTTSFNSTNPQNT.

This is an uncharacterized protein from Dictyostelium discoideum (Social amoeba).